Reading from the N-terminus, the 387-residue chain is Phosphoglycerate kinase (387 aa).

Residues 21–23 (DLN), arginine 36, 59–62 (HLGR), arginine 113, and arginine 146 each bind substrate. Residues lysine 197, glutamate 314, and 340–343 (GGDT) each bind ATP.

The protein belongs to the phosphoglycerate kinase family. Monomer.

Its subcellular location is the cytoplasm. It catalyses the reaction (2R)-3-phosphoglycerate + ATP = (2R)-3-phospho-glyceroyl phosphate + ADP. It functions in the pathway carbohydrate degradation; glycolysis; pyruvate from D-glyceraldehyde 3-phosphate: step 2/5. This Enterobacter sp. (strain 638) protein is Phosphoglycerate kinase.